Consider the following 104-residue polypeptide: UPF0212 protein PH1312 (104 aa).

This sequence belongs to the UPF0212 family.

This Pyrococcus horikoshii (strain ATCC 700860 / DSM 12428 / JCM 9974 / NBRC 100139 / OT-3) protein is UPF0212 protein PH1312.